We begin with the raw amino-acid sequence, 242 residues long: Uridylate kinase (242 aa).

Residue 12–15 participates in ATP binding; that stretch reads KLSG. The involved in allosteric activation by GTP stretch occupies residues 20 to 25; the sequence is GQKGYG. Gly-54 contacts UMP. ATP contacts are provided by Gly-55 and Arg-59. Residues Asp-74 and 135-142 contribute to the UMP site; that span reads TGNPYFST. The ATP site is built by Gln-163, Tyr-168, and Asp-171.

Belongs to the UMP kinase family. As to quaternary structure, homohexamer.

The protein resides in the cytoplasm. The enzyme catalyses UMP + ATP = UDP + ADP. The protein operates within pyrimidine metabolism; CTP biosynthesis via de novo pathway; UDP from UMP (UMPK route): step 1/1. Its activity is regulated as follows. Allosterically activated by GTP. Inhibited by UTP. In terms of biological role, catalyzes the reversible phosphorylation of UMP to UDP. This is Uridylate kinase from Desulforamulus reducens (strain ATCC BAA-1160 / DSM 100696 / MI-1) (Desulfotomaculum reducens).